Here is a 256-residue protein sequence, read N- to C-terminus: DNA repair protein RecO (256 aa).

This sequence belongs to the RecO family.

Its function is as follows. Involved in DNA repair and RecF pathway recombination. This chain is DNA repair protein RecO, found in Streptococcus pneumoniae serotype 2 (strain D39 / NCTC 7466).